The chain runs to 156 residues: Ribosomal RNA large subunit methyltransferase H (156 aa).

S-adenosyl-L-methionine-binding positions include Leu-73, Gly-104, and 123 to 128 (LGALTL).

It belongs to the RNA methyltransferase RlmH family. As to quaternary structure, homodimer.

The protein localises to the cytoplasm. The catalysed reaction is pseudouridine(1915) in 23S rRNA + S-adenosyl-L-methionine = N(3)-methylpseudouridine(1915) in 23S rRNA + S-adenosyl-L-homocysteine + H(+). In terms of biological role, specifically methylates the pseudouridine at position 1915 (m3Psi1915) in 23S rRNA. The protein is Ribosomal RNA large subunit methyltransferase H of Dichelobacter nodosus (strain VCS1703A).